A 381-amino-acid chain; its full sequence is L-lactate dehydrogenase (381 aa).

The FMN hydroxy acid dehydrogenase domain maps to 1–380; sequence MIISASTDYR…SADSLVRELG (380 aa). Tyrosine 24 contacts substrate. FMN contacts are provided by serine 106 and glutamine 127. Tyrosine 129 is a binding site for substrate. Threonine 155 serves as a coordination point for FMN. Arginine 164 provides a ligand contact to substrate. Lysine 251 contributes to the FMN binding site. Histidine 275 acts as the Proton acceptor in catalysis. Position 278 (arginine 278) interacts with substrate. 306–330 contacts FMN; sequence DSGIRTGLDVVRMIALGADSVLLGR.

It belongs to the FMN-dependent alpha-hydroxy acid dehydrogenase family. Homotetramer. The cofactor is FMN.

The protein localises to the cell inner membrane. It carries out the reaction (S)-lactate + A = pyruvate + AH2. In terms of biological role, catalyzes the conversion of L-lactate to pyruvate. Is coupled to the respiratory chain. In Pseudomonas paraeruginosa (strain DSM 24068 / PA7) (Pseudomonas aeruginosa (strain PA7)), this protein is L-lactate dehydrogenase.